The chain runs to 119 residues: Large ribosomal subunit protein bL20 (119 aa).

The protein belongs to the bacterial ribosomal protein bL20 family.

Its function is as follows. Binds directly to 23S ribosomal RNA and is necessary for the in vitro assembly process of the 50S ribosomal subunit. It is not involved in the protein synthesizing functions of that subunit. The polypeptide is Large ribosomal subunit protein bL20 (Lactococcus lactis subsp. cremoris (strain MG1363)).